A 182-amino-acid chain; its full sequence is Ribulose bisphosphate carboxylase small subunit, chloroplastic (182 aa).

The transit peptide at 1–58 (MASSMISSATIATVNCSSPAQANMVAPFTGLKSASAFPVTRKANNDITSLASNGGRVQ) directs the protein to the chloroplast.

It belongs to the RuBisCO small chain family. In terms of assembly, heterohexadecamer of 8 large and 8 small subunits.

It localises to the plastid. Its subcellular location is the chloroplast. RuBisCO catalyzes two reactions: the carboxylation of D-ribulose 1,5-bisphosphate, the primary event in carbon dioxide fixation, as well as the oxidative fragmentation of the pentose substrate. Both reactions occur simultaneously and in competition at the same active site. Although the small subunit is not catalytic it is essential for maximal activity. The sequence is that of Ribulose bisphosphate carboxylase small subunit, chloroplastic from Gossypium hirsutum (Upland cotton).